Reading from the N-terminus, the 343-residue chain is Aspartate carbamoyltransferase catalytic subunit (343 aa).

Positions 91 and 92 each coordinate carbamoyl phosphate. K119 is an L-aspartate binding site. Positions 141, 171, and 174 each coordinate carbamoyl phosphate. Residues R204 and R259 each coordinate L-aspartate. The carbamoyl phosphate site is built by G300 and P301.

This sequence belongs to the aspartate/ornithine carbamoyltransferase superfamily. ATCase family. Heterododecamer (2C3:3R2) of six catalytic PyrB chains organized as two trimers (C3), and six regulatory PyrI chains organized as three dimers (R2).

The catalysed reaction is carbamoyl phosphate + L-aspartate = N-carbamoyl-L-aspartate + phosphate + H(+). Its pathway is pyrimidine metabolism; UMP biosynthesis via de novo pathway; (S)-dihydroorotate from bicarbonate: step 2/3. Functionally, catalyzes the condensation of carbamoyl phosphate and aspartate to form carbamoyl aspartate and inorganic phosphate, the committed step in the de novo pyrimidine nucleotide biosynthesis pathway. The polypeptide is Aspartate carbamoyltransferase catalytic subunit (Burkholderia thailandensis (strain ATCC 700388 / DSM 13276 / CCUG 48851 / CIP 106301 / E264)).